Reading from the N-terminus, the 122-residue chain is Large ribosomal subunit protein uL14c (122 aa).

This sequence belongs to the universal ribosomal protein uL14 family. As to quaternary structure, part of the 50S ribosomal subunit.

The protein localises to the plastid. The protein resides in the chloroplast. Binds to 23S rRNA. This Drimys granadensis protein is Large ribosomal subunit protein uL14c.